The chain runs to 143 residues: Subtelomeric hrmA-associated cluster protein cgnA (143 aa).

29 G-Q-I/R/S repeats span residues 11–13 (GQI), 14–16 (GPI), 17–19 (GQR), 20–22 (GQS), 23–25 (GQR), 26–28 (GQS), 29–31 (GQR), 32–34 (GQS), 35–37 (GQI), 38–40 (GQS), 41–43 (GQS), 44–46 (GQS), 47–49 (GQI), 50–52 (GQI), 53–55 (GQI), 56–58 (GQI), 59–61 (GQI), 62–64 (GQI), 65–67 (GQI), 68–70 (GQI), 71–73 (GQI), 74–76 (GQI), 77–79 (GQI), 80–82 (GQI), 83–85 (GQI), 86–88 (GQI), 89–91 (GQI), 92–94 (GQI), and 95–97 (GQA). One can recognise a Collagen-like domain in the interval 11-68 (GQIGPIGQRGQSGQRGQSGQRGQSGQIGQSGQSGQSGQIGQIGQIGQIGQIGQIGQIG). Positions 11 to 97 (GQIGPIGQRG…IGQIGQIGQA (87 aa)) are 29 X 3 AA approximate tandem repeats of G-Q-I/R/S. The segment at 16-49 (IGQRGQSGQRGQSGQRGQSGQIGQSGQSGQSGQI) is disordered.

The protein localises to the secreted. Functionally, collagen-like protein; part of the subtelomeric hrmA-associated cluster (HAC) containing genes that alter the hyphal surface (such as reduced total chitin or increased beta-glucan exposure) and perturb inter-hyphal interactions within the developing biofilms, resulting in a loss of vertically aligned polarized growing filaments. Consequently, this hypoxia-typic morphotype (called H-MORPH) with altered biofilm architecture leads to increased hypoxia fitness, increased host inflammation, rapid disease progression, and mortality in a murine model of invasive aspergillosis. CgnA is directly involved in the reduction of total surface chitin and the increase of beta-glucan exposure, and mediates the detachment of the extracellular matrix and especially of its component galactosaminogalactan (GAG). The chain is Subtelomeric hrmA-associated cluster protein cgnA from Aspergillus fumigatus (strain ATCC MYA-4609 / CBS 101355 / FGSC A1100 / Af293) (Neosartorya fumigata).